A 658-amino-acid polypeptide reads, in one-letter code: Integrator complex subunit 9 (658 aa).

Lys58 participates in a covalent cross-link: Glycyl lysine isopeptide (Lys-Gly) (interchain with G-Cter in SUMO2). Residues 548-572 (DNKHVLQPPPKPTQPTSSKKRKRVN) form a disordered region. The short motif at 566–570 (KKRKR) is the Nuclear localization signal element.

It belongs to the metallo-beta-lactamase superfamily. RNA-metabolizing metallo-beta-lactamase-like family. INTS9 subfamily. In terms of assembly, component of the Integrator complex, composed of core subunits INTS1, INTS2, INTS3, INTS4, INTS5, INTS6, INTS7, INTS8, INTS9/RC74, INTS10, INTS11/CPSF3L, INTS12, INTS13, INTS14 and INTS15. The core complex associates with protein phosphatase 2A subunits PPP2CA and PPP2R1A, to form the Integrator-PP2A (INTAC) complex. INTS9 is part of the RNA endonuclease subcomplex, composed of INTS4, INTS9, INTS11 and inositol hexakisphosphate (InsP6). Interacts with WDR73; interaction is required for the assembly of the RNA endonuclease subcomplex in the cytoplasm. Interacts with BRAT1; interaction is required for the assembly of the RNA endonuclease subcomplex. Interacts with ESRRB, ESRRB is not a core component of the Integrator complex and this association is a bridge for the interaction with the multiprotein complex Integrator; attracts the transcriptional machinery.

The protein resides in the nucleus. Its subcellular location is the cytoplasm. Functionally, component of the integrator complex, a multiprotein complex that terminates RNA polymerase II (Pol II) transcription in the promoter-proximal region of genes. The integrator complex provides a quality checkpoint during transcription elongation by driving premature transcription termination of transcripts that are unfavorably configured for transcriptional elongation: the complex terminates transcription by (1) catalyzing dephosphorylation of the C-terminal domain (CTD) of Pol II subunit POLR2A/RPB1 and SUPT5H/SPT5, (2) degrading the exiting nascent RNA transcript via endonuclease activity and (3) promoting the release of Pol II from bound DNA. The integrator complex is also involved in terminating the synthesis of non-coding Pol II transcripts, such as enhancer RNAs (eRNAs), small nuclear RNAs (snRNAs), telomerase RNAs and long non-coding RNAs (lncRNAs). Mediates recruitment of cytoplasmic dynein to the nuclear envelope, probably as component of the integrator complex. The protein is Integrator complex subunit 9 (Ints9) of Mus musculus (Mouse).